Consider the following 494-residue polypeptide: Chromosomal replication initiator protein DnaA (494 aa).

A domain I, interacts with DnaA modulators region spans residues 1–103; it reads MTNIGGPVVE…LRVEVIVRGM (103 aa). Residues 103-148 are domain II; that stretch reads MKRVSKGVVCRTSAAPVVLEGQTASSFVESYTEPSVKDIEAGVFGS. A domain III, AAA+ region region spans residues 149 to 371; the sequence is PLDSRYTFES…GAFNQLLFRQ (223 aa). Residues Gly-195, Gly-197, Lys-198, and Thr-199 each contribute to the ATP site. Residues 372-494 form a domain IV, binds dsDNA region; that stretch reads SFESDLSLER…LKRLIGEQAA (123 aa).

Belongs to the DnaA family. As to quaternary structure, oligomerizes as a right-handed, spiral filament on DNA at oriC.

It localises to the cytoplasm. Functionally, plays an essential role in the initiation and regulation of chromosomal replication. ATP-DnaA binds to the origin of replication (oriC) to initiate formation of the DNA replication initiation complex once per cell cycle. Binds the DnaA box (a 9 base pair repeat at the origin) and separates the double-stranded (ds)DNA. Forms a right-handed helical filament on oriC DNA; dsDNA binds to the exterior of the filament while single-stranded (ss)DNA is stabiized in the filament's interior. The ATP-DnaA-oriC complex binds and stabilizes one strand of the AT-rich DNA unwinding element (DUE), permitting loading of DNA polymerase. After initiation quickly degrades to an ADP-DnaA complex that is not apt for DNA replication. Binds acidic phospholipids. This Bartonella quintana (strain Toulouse) (Rochalimaea quintana) protein is Chromosomal replication initiator protein DnaA.